A 214-amino-acid chain; its full sequence is External core antigen (214 aa).

An N-terminal signal peptide occupies residues 1 to 19; sequence MQLFHLCLIISCTCPTVQA. An HBEAG region spans residues 25-27; that stretch reads GWL. The disordered stretch occupies residues 165-214; it reads NAPILSTLPETTVVRRRDRGRSPRRRTPSPRRRRSQSPRRRRSQSRESQC. The segment covering 178–207 has biased composition (basic residues); it reads VRRRDRGRSPRRRTPSPRRRRSQSPRRRRS. A 1; half-length repeat occupies 186-192; it reads SPRRRTP. A 3 X 8 AA repeats of S-P-R-R-R-R-S-Q region spans residues 186 to 208; sequence SPRRRTPSPRRRRSQSPRRRRSQ. The propeptide occupies 186–214; that stretch reads SPRRRTPSPRRRRSQSPRRRRSQSRESQC. 2 repeat units span residues 193 to 200 and 201 to 208.

Belongs to the orthohepadnavirus precore antigen family. As to quaternary structure, homodimerizes. In terms of processing, phosphorylated. Post-translationally, cleaved by host furin.

It is found in the secreted. Its subcellular location is the host nucleus. May regulate immune response to the intracellular capsid in acting as a T-cell tolerogen, by having an immunoregulatory effect which prevents destruction of infected cells by cytotoxic T-cells. This immune regulation may predispose to chronicity during perinatal infections and prevent severe liver injury during adult infections. The sequence is that of External core antigen from Homo sapiens (Human).